A 159-amino-acid chain; its full sequence is Photosystem I reaction center subunit XI (159 aa).

Helical transmembrane passes span 53 to 73, 84 to 104, and 125 to 145; these read LEIG…LGPL, LISG…YGIV, and FTAG…TLLE.

Belongs to the PsaL family.

The protein localises to the cellular thylakoid membrane. In Cyanothece sp. (strain PCC 7425 / ATCC 29141), this protein is Photosystem I reaction center subunit XI.